A 388-amino-acid polypeptide reads, in one-letter code: 2-epi-5-epi-valiolone synthase (388 aa).

NAD(+)-binding positions include 92–95 (ERNK), 124–128 (GIVAD), 148–149 (TT), Lys161, Lys170, and 188–191 (LLAT). Residues Glu203, His267, and His283 each coordinate Zn(2+).

Belongs to the sugar phosphate cyclases superfamily. EEVS-like family. Requires NAD(+) as cofactor. Co(2+) serves as cofactor. It depends on Zn(2+) as a cofactor.

The catalysed reaction is D-sedoheptulose 7-phosphate = 2-epi-5-epi-valiolone + phosphate. In terms of biological role, catalyzes the cyclization of D-sedoheptulose 7-phosphate to 2-epi-5-epi-valiolone. Probably involved in acarbose biosynthesis. This Streptomyces glaucescens protein is 2-epi-5-epi-valiolone synthase.